A 338-amino-acid chain; its full sequence is Phytanoyl-CoA dioxygenase, peroxisomal (338 aa).

The transit peptide at 1-30 (MEQLRAAARLQIVLGHLGRPSAGAVVAHPT) directs the protein to the peroxisome. 2 positions are modified to N6-succinyllysine: Lys59 and Lys108. 2-oxoglutarate contacts are provided by residues Lys120, Met157, 175 to 177 (HQD), and Trp193. His175 and Asp177 together coordinate Fe cation. Lys231 and Lys252 each carry N6-succinyllysine. Residue His264 coordinates Fe cation. 2-oxoglutarate contacts are provided by Ser266 and Arg275. At Ser317 the chain carries Phosphoserine.

It belongs to the PhyH family. In terms of assembly, interacts with FKBP52. Interacts with PHYHIP. It depends on Fe cation as a cofactor. Requires L-ascorbate as cofactor. ATP serves as cofactor. Mg(2+) is required as a cofactor. As to expression, expressed in liver, kidney, and T-cells, but not in spleen, brain, heart, lung and skeletal muscle.

The protein localises to the peroxisome. The enzyme catalyses phytanoyl-CoA + 2-oxoglutarate + O2 = 2-hydroxyphytanoyl-CoA + succinate + CO2. The catalysed reaction is 3-methylhexadecanoyl-CoA + 2-oxoglutarate + O2 = 2-hydroxy-3-methylhexadecanoyl-CoA + succinate + CO2. It catalyses the reaction hexadecanoyl-CoA + 2-oxoglutarate + O2 = 2-hydroxyhexadecanoyl-CoA + succinate + CO2. It carries out the reaction octanoyl-CoA + 2-oxoglutarate + O2 = 2-hydroxyoctanoyl-CoA + succinate + CO2. The enzyme catalyses decanoyl-CoA + 2-oxoglutarate + O2 = 2-hydroxydecanoyl-CoA + succinate + CO2. The catalysed reaction is 3-methylbutanoyl-CoA + 2-oxoglutarate + O2 = 2-hydroxy-3-methylbutanoyl-CoA + succinate + CO2. It catalyses the reaction heptadecanoyl-CoA + 2-oxoglutarate + O2 = 2-hydroxyheptadecanoyl-CoA + succinate + CO2. It carries out the reaction eicosanoyl-CoA + 2-oxoglutarate + O2 = 2-hydroxyeicosanoyl-CoA + succinate + CO2. The enzyme catalyses octadecanoyl-CoA + 2-oxoglutarate + O2 = 2-hydroxyoctadecanoyl-CoA + succinate + CO2. The catalysed reaction is dodecanoyl-CoA + 2-oxoglutarate + O2 = 2-hydroxydodecanoyl-CoA + succinate + CO2. It catalyses the reaction tetradecanoyl-CoA + 2-oxoglutarate + O2 = 2-hydroxytetradecanoyl-CoA + succinate + CO2. It carries out the reaction hexanoyl-CoA + 2-oxoglutarate + O2 = 2-hydroxyhexanoyl-CoA + succinate + CO2. The enzyme catalyses butanoyl-CoA + 2-oxoglutarate + O2 = 2-hydroxybutanoyl-CoA + succinate + CO2. The catalysed reaction is 3-methylnonanoyl-CoA + 2-oxoglutarate + O2 = 2-hydroxy-3-methylnonanoyl-CoA + succinate + CO2. It catalyses the reaction 3-methylundecanoyl-CoA + 2-oxoglutarate + O2 = 2-hydroxy-3-methylundecanoyl-CoA + succinate + CO2. It carries out the reaction 3-methyldodecanoyl-CoA + 2-oxoglutarate + O2 = 2-hydroxy-3-methyldodecanoyl-CoA + succinate + CO2. It participates in lipid metabolism; fatty acid metabolism. In terms of biological role, catalyzes the 2-hydroxylation of not only racemic phytanoyl-CoA and the isomers of 3-methylhexadecanoyl-CoA, but also a variety of other mono-branched 3-methylacyl-CoA esters (with a chain length of at least seven carbon atoms) and straight-chain acyl-CoA esters (with a chain length longer than four carbon atoms). Does not hydroxylate long and very long straight chain acyl-CoAs or 2-methyl- and 4-methyl-branched acyl-CoAs. The protein is Phytanoyl-CoA dioxygenase, peroxisomal (PHYH) of Homo sapiens (Human).